The chain runs to 136 residues: MARTKQTARKSTGGKAPRKQLASKAARKSAPVSGGVKKPHRYKPGTVALREIRRFQKSTELLIRKLPFQRLVREIAQDFKSDLRFQSSAIGALQEAVEAYLVGLFEDTNLCAIHAKRVTIQKKDIQLARRLRGERS.

Positions 1 to 42 (MARTKQTARKSTGGKAPRKQLASKAARKSAPVSGGVKKPHRY) are disordered. Residue Lys5 is modified to N6,N6,N6-trimethyllysine; alternate. Lys5 is modified (N6,N6-dimethyllysine; alternate). 2 positions are modified to N6-methyllysine; alternate: Lys5 and Lys10. Lys10 is subject to N6-acetyllysine; alternate. Phosphoserine is present on Ser11. Position 15 is an N6,N6-dimethyllysine; alternate (Lys15). Lys15, Lys19, Lys24, Lys28, and Lys37 each carry N6-acetyllysine; alternate. Lys19, Lys24, Lys28, and Lys37 each carry N6-methyllysine; alternate. Residues Lys28 and Lys37 each carry the N6,N6,N6-trimethyllysine; alternate modification. An N6,N6-dimethyllysine; alternate mark is found at Lys28 and Lys37. 2 positions are modified to N6-acetyllysine: Lys57 and Lys65. Lys80 bears the N6,N6,N6-trimethyllysine; alternate mark. The residue at position 80 (Lys80) is an N6,N6-dimethyllysine; alternate. Residue Lys80 is modified to N6-methyllysine; alternate.

This sequence belongs to the histone H3 family. The nucleosome is a histone octamer containing two molecules each of H2A, H2B, H3 and H4 assembled in one H3-H4 heterotetramer and two H2A-H2B heterodimers. The octamer wraps approximately 147 bp of DNA. Phosphorylated to form H3S10ph. H3S10ph promotes subsequent H3K14ac formation and is required for transcriptional activation through TBP recruitment to the promoters. In terms of processing, mono-, di- and trimethylated by the COMPASS complex to form H3K4me1/2/3. H3K4me activates gene expression by regulating transcription elongation and plays a role in telomere length maintenance. H3K4me enrichment correlates with transcription levels, and occurs in a 5' to 3' gradient with H3K4me3 enrichment at the 5'-end of genes, shifting to H3K4me2 and then H3K4me1. Methylated by SET2 to form H3K36me. H3K36me represses gene expression. Methylated by DOT1 to form H3K79me. H3K79me is required for association of SIR proteins with telomeric regions and for telomeric silencing. The COMPASS-mediated formation of H3K4me2/3 and the DOT1-mediated formation of H3K79me require H2BK123ub1. Post-translationally, acetylation of histone H3 leads to transcriptional activation. H3K14ac formation by GCN5 is promoted by H3S10ph. H3K14ac can also be formed by ESA1. H3K56ac formation occurs predominantly in newly synthesized H3 molecules during G1, S and G2/M of the cell cycle and may be involved in DNA repair.

It localises to the nucleus. The protein localises to the chromosome. Functionally, core component of nucleosome. Nucleosomes wrap and compact DNA into chromatin, limiting DNA accessibility to the cellular machineries which require DNA as a template. Histones thereby play a central role in transcription regulation, DNA repair, DNA replication and chromosomal stability. DNA accessibility is regulated via a complex set of post-translational modifications of histones, also called histone code, and nucleosome remodeling. The chain is Histone H3.3 (HHT3) from Lodderomyces elongisporus (strain ATCC 11503 / CBS 2605 / JCM 1781 / NBRC 1676 / NRRL YB-4239) (Yeast).